The following is a 234-amino-acid chain: Probable pectate lyase F (234 aa).

The N-terminal stretch at 1 to 17 (MFSRIALLPAFLPVALA) is a signal peptide. N-linked (GlcNAc...) asparagine glycosylation is found at asparagine 168 and asparagine 194.

It belongs to the polysaccharide lyase 3 family. Ca(2+) is required as a cofactor.

The protein localises to the secreted. The enzyme catalyses Eliminative cleavage of (1-&gt;4)-alpha-D-galacturonan to give oligosaccharides with 4-deoxy-alpha-D-galact-4-enuronosyl groups at their non-reducing ends.. Pectinolytic enzyme consist of four classes of enzymes: pectin lyase, polygalacturonase, pectin methylesterase and rhamnogalacturonase. Among pectinolytic enzymes, pectin lyase is the most important in depolymerization of pectin, since it cleaves internal glycosidic bonds of highly methylated pectins. Favors pectate, the anion, over pectin, the methyl ester. The protein is Probable pectate lyase F (plyF) of Aspergillus flavus (strain ATCC 200026 / FGSC A1120 / IAM 13836 / NRRL 3357 / JCM 12722 / SRRC 167).